The primary structure comprises 329 residues: VSG expression site-associated protein 221A (329 aa).

An N-terminal signal peptide occupies residues 1-23; the sequence is MKVEIVELVVLLFSVTCVDAWLQ. Residues Asn-73, Asn-294, and Asn-308 are each glycosylated (N-linked (GlcNAc...) asparagine).

Its function is as follows. Not known but may be related to activation of the variant surface glycoprotein genes. The polypeptide is VSG expression site-associated protein 221A (Trypanosoma brucei brucei).